Reading from the N-terminus, the 160-residue chain is Ureidoglycolate lyase (160 aa).

The protein belongs to the ureidoglycolate lyase family. In terms of assembly, homodimer. Requires Ni(2+) as cofactor.

The catalysed reaction is (S)-ureidoglycolate = urea + glyoxylate. It participates in nitrogen metabolism; (S)-allantoin degradation. Its function is as follows. Catalyzes the catabolism of the allantoin degradation intermediate (S)-ureidoglycolate, generating urea and glyoxylate. Involved in the utilization of allantoin as nitrogen source. The chain is Ureidoglycolate lyase from Salmonella agona (strain SL483).